Reading from the N-terminus, the 214-residue chain is Adenylate kinase (214 aa).

Residue 10–15 coordinates ATP; the sequence is GAGKGT. The NMP stretch occupies residues 30-59; that stretch reads STGDMLRAAVKAGTPLGLEAKKVMDAGQLV. Residues T31, R36, 57–59, 85–88, and Q92 each bind AMP; these read QLV and GFPR. Positions 122–159 are LID; that stretch reads GRRVHPGSGRVYHIVFNQPKVEGKDDVTGEDLAIRPDD. Residues R123 and 132–133 contribute to the ATP site; that span reads VY. R156 and R167 together coordinate AMP. Residue Q200 participates in ATP binding.

The protein belongs to the adenylate kinase family. Monomer.

The protein resides in the cytoplasm. It carries out the reaction AMP + ATP = 2 ADP. It participates in purine metabolism; AMP biosynthesis via salvage pathway; AMP from ADP: step 1/1. Its function is as follows. Catalyzes the reversible transfer of the terminal phosphate group between ATP and AMP. Plays an important role in cellular energy homeostasis and in adenine nucleotide metabolism. The protein is Adenylate kinase of Shewanella woodyi (strain ATCC 51908 / MS32).